Here is a 531-residue protein sequence, read N- to C-terminus: Polypyrimidine tract-binding protein 2 (531 aa).

Residue Met-1 is modified to N-acetylmethionine. Phosphoserine occurs at positions 26 and 27. RRM domains lie at Arg-59–His-133 and Leu-181–Leu-257. Ser-308 carries the phosphoserine modification. RRM domains follow at residues Thr-338 to His-412 and Ala-455 to Ser-529.

In terms of assembly, monomer. Interacts with NOVA1; the interaction is direct. Identified in a mRNP complex, at least composed of DHX9, DDX3X, ELAVL1, HNRNPU, IGF2BP1, ILF3, PABPC1, PCBP2, PTBP2, STAU1, STAU2, SYNCRIP and YBX1. Part of a ternary complex containing KHSRP and HNRPH1. Interacts with NOVA2; the interaction is direct.

The protein localises to the nucleus. RNA-binding protein which binds to intronic polypyrimidine tracts and mediates negative regulation of exons splicing. May antagonize in a tissue-specific manner the ability of NOVA1 to activate exon selection. In addition to its function in pre-mRNA splicing, plays also a role in the regulation of translation. This chain is Polypyrimidine tract-binding protein 2, found in Rattus norvegicus (Rat).